The chain runs to 361 residues: Replication factor C subunit 3 (361 aa).

Over residues 1–28 (MAGATAATPMDIDAAAPPPGAAAKGKAP) the composition is skewed to low complexity. Positions 1–39 (MAGATAATPMDIDAAAPPPGAAAKGKAPLSSTPGGRAAP) are disordered. 77–84 (YGPPGTGK) is an ATP binding site.

The protein belongs to the activator 1 small subunits family. As to quaternary structure, heterotetramer of subunits RFC2, RFC3, RFC4 and RFC5 that can form a complex with RFC1. In terms of tissue distribution, expressed in roots, leaves, shoot apical meristem (SAM), flag leaves and panicles.

The protein localises to the nucleus. May be involved in DNA replication and thus regulate cell proliferation. The chain is Replication factor C subunit 3 (RFC3) from Oryza sativa subsp. japonica (Rice).